Reading from the N-terminus, the 289-residue chain is MFLLTPVLVAVVCILMVWIFKNADGATKRREEEPRARAEARPWVDEDLKDSTDVLQVEEDADEWQESEEEVEHVPFSHTRYPEKEMVRRSQEFYELLNKRRSVRFISNERVPMEVIDNVIKAAGTAPSGAHTEPWTFVVVKDPDVKHRIREIMEEEEKINYLKRMGPRWVTDLKKLRTNWIKEYWDTAPVLILIFKQVHGFAANGKKKIHYYNEISVSIACGIFLAALQNAGLVTVTTTPFNCGPRLRVFLNRPANEKLLMFLPVGYPSKEATVPDLPRKPLDQIMVTV.

Residues 1-21 (MFLLTPVLVAVVCILMVWIFK) traverse the membrane as a helical segment. Residues 100-104 (RRSVR) and 128-129 (SG) contribute to the FMN site. Residues A130, E157, Y161, and K182 each coordinate 3,5-diiodo-L-tyrosine. 3-iodo-L-tyrosine-binding residues include A130, E157, Y161, and K182. FMN is bound by residues 237–239 (TTT) and R279.

This sequence belongs to the nitroreductase family. Homodimer. The cofactor is FMN. In terms of tissue distribution, detected in thyroid (at protein level).

It localises to the cell membrane. The protein resides in the cytoplasmic vesicle membrane. The catalysed reaction is 2 iodide + L-tyrosine + 2 NADP(+) = 3,5-diiodo-L-tyrosine + 2 NADPH + H(+). It carries out the reaction iodide + L-tyrosine + NADP(+) = 3-iodo-L-tyrosine + NADPH. It catalyses the reaction 3-iodo-L-tyrosine + iodide + NADP(+) = 3,5-diiodo-L-tyrosine + NADPH + H(+). The enzyme catalyses L-tyrosine + chloride + NADP(+) = 3-chloro-L-tyrosine + NADPH. The catalysed reaction is bromide + L-tyrosine + NADP(+) = 3-bromo-L-tyrosine + NADPH. Catalyzes the dehalogenation of halotyrosines such as 3-bromo-L-tyrosine, 3-chloro-L-tyrosine, 3-iodo-L-tyrosine and 3,5-diiodo-L-tyrosine. During thyroid hormone biosynthesis, facilitates iodide salvage by catalysing the oxidative NADPH-dependent deiodination of the halogenated by-products of thyroid hormone production, monoiodotyrosine (L-MIT) and diiodotyrosine (L-DIT). The scavanged iodide can then reenter the hormone-producing pathways. Acts more efficiently on 3-iodo-L-tyrosine than 3,5-diiodo-L-tyrosine. The polypeptide is Iodotyrosine deiodinase 1 (IYD) (Sus scrofa (Pig)).